The sequence spans 401 residues: Tyrosine--tRNA ligase (401 aa).

The 'HIGH' region motif lies at 42–51 (PTAPDLHLGH). Positions 226–230 (KMSKS) match the 'KMSKS' region motif. K229 contributes to the ATP binding site. An S4 RNA-binding domain is found at 336–397 (IALAQLLKQI…GKRRIAKLSI (62 aa)).

It belongs to the class-I aminoacyl-tRNA synthetase family. TyrS type 2 subfamily. As to quaternary structure, homodimer.

The protein localises to the cytoplasm. It carries out the reaction tRNA(Tyr) + L-tyrosine + ATP = L-tyrosyl-tRNA(Tyr) + AMP + diphosphate + H(+). In terms of biological role, catalyzes the attachment of tyrosine to tRNA(Tyr) in a two-step reaction: tyrosine is first activated by ATP to form Tyr-AMP and then transferred to the acceptor end of tRNA(Tyr). This chain is Tyrosine--tRNA ligase, found in Legionella pneumophila (strain Lens).